The sequence spans 381 residues: L-lactate dehydrogenase (381 aa).

The FMN hydroxy acid dehydrogenase domain occupies 1–380 (MIISASTDYR…NRDSLAVSER (380 aa)). Y24 serves as a coordination point for substrate. Residues S106 and Q127 each contribute to the FMN site. Y129 is a substrate binding site. Residue T155 coordinates FMN. R164 contributes to the substrate binding site. FMN is bound at residue K251. The Proton acceptor role is filled by H275. A substrate-binding site is contributed by R278. 306-330 (DSGIRTGLDVVRMIALGADSVLLGR) provides a ligand contact to FMN.

The protein belongs to the FMN-dependent alpha-hydroxy acid dehydrogenase family. The cofactor is FMN.

It localises to the cell inner membrane. The enzyme catalyses (S)-lactate + A = pyruvate + AH2. Its function is as follows. Catalyzes the conversion of L-lactate to pyruvate. Is coupled to the respiratory chain. The chain is L-lactate dehydrogenase from Yersinia pseudotuberculosis serotype O:1b (strain IP 31758).